A 447-amino-acid chain; its full sequence is ATP-dependent protease ATPase subunit HslU (447 aa).

Residues Ile17, 59–64, Asp256, Glu321, and Arg393 contribute to the ATP site; that span reads GVGKTE.

The protein belongs to the ClpX chaperone family. HslU subfamily. A double ring-shaped homohexamer of HslV is capped on each side by a ring-shaped HslU homohexamer. The assembly of the HslU/HslV complex is dependent on binding of ATP.

Its subcellular location is the cytoplasm. Its function is as follows. ATPase subunit of a proteasome-like degradation complex; this subunit has chaperone activity. The binding of ATP and its subsequent hydrolysis by HslU are essential for unfolding of protein substrates subsequently hydrolyzed by HslV. HslU recognizes the N-terminal part of its protein substrates and unfolds these before they are guided to HslV for hydrolysis. The chain is ATP-dependent protease ATPase subunit HslU from Stutzerimonas stutzeri (strain A1501) (Pseudomonas stutzeri).